A 94-amino-acid polypeptide reads, in one-letter code: HssA/B-like protein 49 (94 aa).

The disordered stretch occupies residues M1 to S20.

It belongs to the hssA/B family.

This Dictyostelium discoideum (Social amoeba) protein is HssA/B-like protein 49 (hssl49).